A 511-amino-acid polypeptide reads, in one-letter code: Ribose import ATP-binding protein RbsA 3 (511 aa).

2 ABC transporter domains span residues 21–257 (LEMR…VGRD) and 256–511 (RDVE…TGNA). 53 to 60 (GENGAGKS) is a binding site for ATP.

It belongs to the ABC transporter superfamily. Ribose importer (TC 3.A.1.2.1) family. In terms of assembly, the complex is composed of an ATP-binding protein (RbsA), two transmembrane proteins (RbsC) and a solute-binding protein (RbsB).

The protein resides in the cell inner membrane. It carries out the reaction D-ribose(out) + ATP + H2O = D-ribose(in) + ADP + phosphate + H(+). In terms of biological role, part of the ABC transporter complex RbsABC involved in ribose import. Responsible for energy coupling to the transport system. This chain is Ribose import ATP-binding protein RbsA 3, found in Rhizobium etli (strain ATCC 51251 / DSM 11541 / JCM 21823 / NBRC 15573 / CFN 42).